We begin with the raw amino-acid sequence, 426 residues long: Phosphomethylpyrimidine synthase (426 aa).

Substrate contacts are provided by residues Asn65, Met94, Tyr123, His162, 184–186, 225–228, and Glu264; these read SRG and DGLR. Residue His268 coordinates Zn(2+). Tyr291 provides a ligand contact to substrate. His332 is a Zn(2+) binding site. [4Fe-4S] cluster contacts are provided by Cys409, Cys412, and Cys416.

The protein belongs to the ThiC family. Requires [4Fe-4S] cluster as cofactor.

The catalysed reaction is 5-amino-1-(5-phospho-beta-D-ribosyl)imidazole + S-adenosyl-L-methionine = 4-amino-2-methyl-5-(phosphooxymethyl)pyrimidine + CO + 5'-deoxyadenosine + formate + L-methionine + 3 H(+). It participates in cofactor biosynthesis; thiamine diphosphate biosynthesis. In terms of biological role, catalyzes the synthesis of the hydroxymethylpyrimidine phosphate (HMP-P) moiety of thiamine from aminoimidazole ribotide (AIR) in a radical S-adenosyl-L-methionine (SAM)-dependent reaction. The polypeptide is Phosphomethylpyrimidine synthase (Thermodesulfovibrio yellowstonii (strain ATCC 51303 / DSM 11347 / YP87)).